The sequence spans 427 residues: UBX domain-containing protein 10 (427 aa).

Positions 247-311 (LERFRSEREA…VQKKKKQYRA (65 aa)) form a coiled coil. The UBX domain maps to 323 to 425 (SEDEPARLSI…FPNGTVVVEL (103 aa)).

The protein resides in the endoplasmic reticulum. Involved in protein degradation through the ubiquitin/proteasome pathway. The protein is UBX domain-containing protein 10 (ucp10) of Schizosaccharomyces pombe (strain 972 / ATCC 24843) (Fission yeast).